Here is a 465-residue protein sequence, read N- to C-terminus: RuvB-like helicase 2 (465 aa).

72-79 (GPPSTGKT) is a binding site for ATP.

Belongs to the RuvB family. As to quaternary structure, may form heterododecamers with RVB1. Component of the SWR1 chromatin remodeling complex, the INO80 chromatin remodeling complex, and of the R2TP complex. Interacts with dil1.

It is found in the nucleus. It catalyses the reaction ATP + H2O = ADP + phosphate + H(+). Its function is as follows. DNA helicase which participates in several chromatin remodeling complexes, including the SWR1 and the INO80 complexes. The SWR1 complex mediates the ATP-dependent exchange of histone H2A for the H2A variant HZT1 leading to transcriptional regulation of selected genes by chromatin remodeling. The INO80 complex remodels chromatin by shifting nucleosomes and is involved in DNA repair. Also involved in pre-rRNA processing. This is RuvB-like helicase 2 (rvb2) from Schizosaccharomyces pombe (strain 972 / ATCC 24843) (Fission yeast).